The primary structure comprises 286 residues: Puff II/9-2 protein (286 aa).

The N-terminal stretch at 1-19 (MKQFIVLTVVLLAIQELQG) is a signal peptide. Residues 61-235 (IDGLKKENNI…EKDLNTLRCE (175 aa)) are helical. An N-linked (GlcNAc...) asparagine glycan is attached at Asn-156.

The sequence is that of Puff II/9-2 protein (II/9-2) from Bradysia coprophila (Dark-winged fungus gnat).